The primary structure comprises 345 residues: MISPVLKKYARPSLWYRFCAWVASKKNRLYVGWFGVLMIPTLLTAATVFIIAFIAAPPVDIDGIREPVSGSLFYGNNIITGAVVPTSNAIGLHFYPIWEATSLDEWLYNGGPYQLIVCHFFIGICSYMGREWELSFRLGMRPWIAVAYSAPVAAASAVFIVYPLGQGSFSDGMPLGISGTFNFMIVFQAEHNILMHPFHMLGVAGVFGGSLFSAMHGSLVTSSLLRETTENESINVGYKFGQEEETYNIIAAHAYFGRLIFQYASFNNSRSLHFFLAVWPVVGIWFTALGVSTMAFNLNGFNFNQSVIDSQGRVINTWADIINRANLGMEVMHERNAHNFPLDLA.

3 helical membrane passes run 30-47 (YVGW…TAAT), 119-134 (HFFI…EWEL), and 143-157 (WIAV…AASA). Position 119 (His119) interacts with chlorophyll a. Residue Tyr127 participates in pheophytin a binding. [CaMn4O5] cluster-binding residues include Asp171 and Glu190. A helical transmembrane segment spans residues 198 to 219 (FHMLGVAGVFGGSLFSAMHGSL). Residue His199 coordinates chlorophyll a. A quinone-binding positions include His216 and 265–266 (SF). His216 provides a ligand contact to Fe cation. His273 is a binding site for Fe cation. Residues 275–289 (FLAVWPVVGIWFTAL) form a helical membrane-spanning segment. 4 residues coordinate [CaMn4O5] cluster: His333, Glu334, Asp343, and Ala345.

Belongs to the reaction center PufL/M/PsbA/D family. PSII is composed of 1 copy each of membrane proteins PsbA, PsbB, PsbC, PsbD, PsbE, PsbF, PsbH, PsbI, PsbJ, PsbK, PsbL, PsbM, PsbT, PsbY, PsbZ, Psb30/Ycf12, at least 3 peripheral proteins of the oxygen-evolving complex and a large number of cofactors. It forms dimeric complexes. It depends on The D1/D2 heterodimer binds P680, chlorophylls that are the primary electron donor of PSII, and subsequent electron acceptors. It shares a non-heme iron and each subunit binds pheophytin, quinone, additional chlorophylls, carotenoids and lipids. D1 provides most of the ligands for the Mn4-Ca-O5 cluster of the oxygen-evolving complex (OEC). There is also a Cl(-1) ion associated with D1 and D2, which is required for oxygen evolution. The PSII complex binds additional chlorophylls, carotenoids and specific lipids. as a cofactor. Tyr-162 forms a radical intermediate that is referred to as redox-active TyrZ, YZ or Y-Z.

The protein localises to the plastid. The protein resides in the chloroplast thylakoid membrane. The enzyme catalyses 2 a plastoquinone + 4 hnu + 2 H2O = 2 a plastoquinol + O2. Photosystem II (PSII) is a light-driven water:plastoquinone oxidoreductase that uses light energy to abstract electrons from H(2)O, generating O(2) and a proton gradient subsequently used for ATP formation. It consists of a core antenna complex that captures photons, and an electron transfer chain that converts photonic excitation into a charge separation. The D1/D2 (PsbA/PsbD) reaction center heterodimer binds P680, the primary electron donor of PSII as well as several subsequent electron acceptors. The polypeptide is Photosystem II protein D1 (Euglena gracilis).